A 238-amino-acid polypeptide reads, in one-letter code: Uridylate kinase (238 aa).

Residue 12–15 participates in ATP binding; sequence KLSG. Residue glycine 54 coordinates UMP. Glycine 55 and arginine 59 together coordinate ATP. UMP-binding positions include aspartate 74 and 135–142; that span reads TGNPFFTT. Residues threonine 162, tyrosine 168, and aspartate 171 each coordinate ATP.

Belongs to the UMP kinase family. In terms of assembly, homohexamer.

Its subcellular location is the cytoplasm. It carries out the reaction UMP + ATP = UDP + ADP. The protein operates within pyrimidine metabolism; CTP biosynthesis via de novo pathway; UDP from UMP (UMPK route): step 1/1. Inhibited by UTP. Catalyzes the reversible phosphorylation of UMP to UDP. In Nitrosospira multiformis (strain ATCC 25196 / NCIMB 11849 / C 71), this protein is Uridylate kinase.